Reading from the N-terminus, the 421-residue chain is ATP-dependent RNA helicase RhlB (421 aa).

Positions 9-37 (QKFSDFALHPKVVEALEKKGFHNCTPIQA) match the Q motif motif. Positions 40 to 219 (LPLTLAGRDV…FEQMNNAEYI (180 aa)) constitute a Helicase ATP-binding domain. 53–60 (AQTGTGKT) provides a ligand contact to ATP. Residues 165 to 168 (DEAD) carry the DEAD box motif. The Helicase C-terminal domain occupies 245–390 (RLLQTLIEEE…VSKYNPDALM (146 aa)). The disordered stretch occupies residues 392-421 (DLPKPLRLTRPRTGNGPRRTGAPRNRRRSG). The segment covering 402–414 (PRTGNGPRRTGAP) has biased composition (low complexity).

Belongs to the DEAD box helicase family. RhlB subfamily. Component of the RNA degradosome, which is a multiprotein complex involved in RNA processing and mRNA degradation.

It localises to the cytoplasm. It carries out the reaction ATP + H2O = ADP + phosphate + H(+). Its function is as follows. DEAD-box RNA helicase involved in RNA degradation. Has RNA-dependent ATPase activity and unwinds double-stranded RNA. This chain is ATP-dependent RNA helicase RhlB, found in Escherichia coli O139:H28 (strain E24377A / ETEC).